Here is a 327-residue protein sequence, read N- to C-terminus: Ribose-phosphate pyrophosphokinase (327 aa).

Residues 40–42 (DGE) and 99–100 (RQ) contribute to the ATP site. Mg(2+) is bound by residues His134 and Asp173. The active site involves Lys196. Residues Arg198, Asp222, and 226 to 230 (DTANT) contribute to the D-ribose 5-phosphate site.

It belongs to the ribose-phosphate pyrophosphokinase family. Class I subfamily. As to quaternary structure, homohexamer. Mg(2+) serves as cofactor.

Its subcellular location is the cytoplasm. It catalyses the reaction D-ribose 5-phosphate + ATP = 5-phospho-alpha-D-ribose 1-diphosphate + AMP + H(+). It participates in metabolic intermediate biosynthesis; 5-phospho-alpha-D-ribose 1-diphosphate biosynthesis; 5-phospho-alpha-D-ribose 1-diphosphate from D-ribose 5-phosphate (route I): step 1/1. In terms of biological role, involved in the biosynthesis of the central metabolite phospho-alpha-D-ribosyl-1-pyrophosphate (PRPP) via the transfer of pyrophosphoryl group from ATP to 1-hydroxyl of ribose-5-phosphate (Rib-5-P). The sequence is that of Ribose-phosphate pyrophosphokinase from Chromobacterium violaceum (strain ATCC 12472 / DSM 30191 / JCM 1249 / CCUG 213 / NBRC 12614 / NCIMB 9131 / NCTC 9757 / MK).